A 340-amino-acid polypeptide reads, in one-letter code: Serine racemase (340 aa).

A Mg(2+)-binding site is contributed by glutamate 13. The ATP site is built by serine 31, serine 32, isoleucine 33, lysine 51, and threonine 52. Lysine 56 functions as the Proton acceptor in the catalytic mechanism. An N6-(pyridoxal phosphate)lysine modification is found at lysine 56. Ca(2+) contacts are provided by proline 69 and threonine 81. Serine 84 acts as the Proton acceptor in catalysis. Residue asparagine 86 participates in pyridoxal 5'-phosphate binding. Glutamine 89 provides a ligand contact to ATP. The residue at position 113 (cysteine 113) is an S-nitrosocysteine. An ATP-binding site is contributed by tyrosine 121. Asparagine 154 contacts pyridoxal 5'-phosphate. Aspartate 178 serves as a coordination point for Mg(2+). Pyridoxal 5'-phosphate contacts are provided by glycine 185, glycine 186, glycine 187, glycine 188, and methionine 189. The Mg(2+) site is built by glutamate 210, alanine 214, aspartate 216, and asparagine 247. Residues glutamate 210, alanine 214, aspartate 216, and asparagine 247 each coordinate Ca(2+). The Mn(2+) site is built by glutamate 210, alanine 214, and aspartate 216. Lysine 279 provides a ligand contact to ATP. Serine 313 contributes to the pyridoxal 5'-phosphate binding site. Residue asparagine 316 coordinates ATP.

It belongs to the serine/threonine dehydratase family. Homodimer. Requires Mg(2+) as cofactor. The cofactor is Mn(2+). Ca(2+) serves as cofactor. It depends on pyridoxal 5'-phosphate as a cofactor. In terms of processing, S-nitrosylated, leading to decrease the enzyme activity. In terms of tissue distribution, expressed in the cerebellum, hippocampus, dorsolateral prefrontal cortex, and in motor neurons and glial cells of the lumbar spinal cord (at protein level). Increased in the dorsolateral prefrontal cortex of schizophrenic patients (at protein level). Brain: expressed at high levels in hippocampus and corpus callosum, intermediate levels in substantia nigra and caudate, and low levels in amygdala, thalamus, and subthalamic nuclei. Expressed in heart, skeletal muscle, kidney, and liver.

The enzyme catalyses L-serine = D-serine. It catalyses the reaction D-serine = pyruvate + NH4(+). It carries out the reaction L-serine = pyruvate + NH4(+). Its activity is regulated as follows. Allosterically activated by magnesium, and possibly also other divalent metal cations. Allosterically activated by ATP, ADP or GTP. Competitively inhibited by malonate. Inhibited by meso-tartrate and malonate. Catalyzes the synthesis of D-serine from L-serine. D-serine is a key coagonist with glutamate at NMDA receptors. Has dehydratase activity towards both L-serine and D-serine. The chain is Serine racemase (SRR) from Homo sapiens (Human).